We begin with the raw amino-acid sequence, 100 residues long: Small ribosomal subunit protein uS14c (100 aa).

This sequence belongs to the universal ribosomal protein uS14 family. In terms of assembly, part of the 30S ribosomal subunit.

It is found in the plastid. It localises to the chloroplast. In terms of biological role, binds 16S rRNA, required for the assembly of 30S particles. The chain is Small ribosomal subunit protein uS14c from Phalaenopsis aphrodite subsp. formosana (Moth orchid).